Reading from the N-terminus, the 388-residue chain is DNA replication and repair protein RecF (388 aa).

Residue 30 to 37 (GANGNGKT) participates in ATP binding.

This sequence belongs to the RecF family.

The protein localises to the cytoplasm. The RecF protein is involved in DNA metabolism; it is required for DNA replication and normal SOS inducibility. RecF binds preferentially to single-stranded, linear DNA. It also seems to bind ATP. This Nocardia farcinica (strain IFM 10152) protein is DNA replication and repair protein RecF.